The sequence spans 108 residues: uncharacterized protein (108 aa).

The segment at 81-108 (FKCLDSPPPVPPSSSQGEDEENTVDSQY) is disordered. A compositionally biased stretch (acidic residues) spans 97 to 108 (GEDEENTVDSQY).

This is an uncharacterized protein from Saccharomyces cerevisiae (strain ATCC 204508 / S288c) (Baker's yeast).